The following is a 2193-amino-acid chain: Genome polyprotein (2193 aa).

The interval 1–22 (MGSQVSTQRSGSHENSNSATEG) is disordered. Glycine 2 carries the N-myristoyl glycine; by host lipid modification. The Cytoplasmic portion of the chain corresponds to 2-1503 (GSQVSTQRSG…HLNRAVLVMQ (1502 aa)). Amphipathic alpha-helix stretches follow at residues 566 to 588 (GDRV…LTQA) and 568 to 588 (RVAD…LTQA). Catalysis depends on for protease 2A activity residues histidine 883 and aspartate 901. Positions 918 and 920 each coordinate Zn(2+). The active-site For protease 2A activity is cysteine 972. 2 residues coordinate Zn(2+): cysteine 978 and histidine 980. The interval 1112-1184 (SASWLKKFND…EQSAASQEDL (73 aa)) is membrane-binding. An oligomerization region spans residues 1112–1250 (SASWLKKFND…SPGTGKSLAT (139 aa)). The segment at 1133-1137 (SNKIS) is RNA-binding. In terms of domain architecture, SF3 helicase spans 1216–1374 (EKRMNNYMQF…YKTDLGRLDA (159 aa)). 1240–1247 (GSPGTGKS) provides a ligand contact to ATP. Positions 1381, 1392, 1393, and 1397 each coordinate Zn(2+). The C4-type; degenerate zinc finger occupies 1381-1397 (CSENNTANFKRCSPLVC). Positions 1424–1431 (EYSNRSAI) are RNA-binding. The tract at residues 1435-1440 (IEALFQ) is oligomerization. An intramembrane segment occupies 1504-1519 (SIATVVAVVSLVYVIY). At 1520–2193 (KLFAGFQGAY…NLRRNWLELF (674 aa)) the chain is on the cytoplasmic side. The residue at position 1529 (tyrosine 1529) is an O-(5'-phospho-RNA)-tyrosine. The Peptidase C3 domain maps to 1549 to 1727 (GPSLDFALSL…FCAGLKRSYF (179 aa)). Active-site for protease 3C activity residues include histidine 1588, glutamate 1619, and cysteine 1695. Residues 1958 to 2073 (GSLFAFDYSG…ASYPFPIDCL (116 aa)) form the RdRp catalytic domain. Mg(2+)-binding residues include aspartate 1964 and aspartate 2060.

Belongs to the picornaviruses polyprotein family. As to quaternary structure, interacts with capsid protein VP1 and capsid protein VP3 to form heterotrimeric protomers. In terms of assembly, interacts with capsid protein VP0, and capsid protein VP3 to form heterotrimeric protomers. Five protomers subsequently associate to form pentamers which serve as building blocks for the capsid. Interacts with capsid protein VP2, capsid protein VP3 and capsid protein VP4 following cleavage of capsid protein VP0. Interacts with host SCARB2. Interacts with host ARF6; this interaction mediates viral endocytosis. Interacts with capsid protein VP1 and capsid protein VP3 in the mature capsid. Interacts with host SCARB2. As to quaternary structure, interacts with capsid protein VP0 and capsid protein VP1 to form heterotrimeric protomers. Five protomers subsequently associate to form pentamers which serve as building blocks for the capsid. Interacts with capsid protein VP4 in the mature capsid. Interacts with protein 2C; this interaction may be important for virion morphogenesis. In terms of assembly, interacts with capsid protein VP1 and capsid protein VP3. Homodimer. As to quaternary structure, interacts with host BAX; this interaction activates the mitochondrial apoptotic pathway. Interacts with host ILF2. In terms of assembly, homohexamer; forms a hexameric ring structure with 6-fold symmetry characteristic of AAA+ ATPases. Interacts (via N-terminus) with host RTN3 (via reticulon domain); this interaction is important for viral replication. Interacts with capsid protein VP3; this interaction may be important for virion morphogenesis. Interacts with protein 3CD. As to quaternary structure, homodimer. Interacts with host GBF1. Interacts (via GOLD domain) with host ACBD3 (via GOLD domain); this interaction allows the formation of a viral protein 3A/ACBD3 heterotetramer with a 2:2 stoichiometry, which will stimulate the recruitment of host PI4KB in order to synthesize PI4P at the viral RNA replication sites. In terms of assembly, interacts with RNA-directed RNA polymerase. Interacts with host IFIH1/MDA5; this interaction inhibits host IFIH1. Interacts with host RIGI. As to quaternary structure, interacts with protein 3AB and with RNA-directed RNA polymerase. In terms of assembly, interacts with Viral protein genome-linked and with protein 3CD. Requires Mg(2+) as cofactor. Post-translationally, specific enzymatic cleavages in vivo by the viral proteases yield processing intermediates and the mature proteins. In terms of processing, myristoylation is required for the formation of pentamers during virus assembly. Further assembly of 12 pentamers and a molecule of genomic RNA generates the provirion. During virion maturation, immature virions are rendered infectious following cleavage of VP0 into VP4 and VP2. This maturation seems to be an autocatalytic event triggered by the presence of RNA in the capsid and it is followed by a conformational change infectious virion. Post-translationally, myristoylation is required during RNA encapsidation and formation of the mature virus particle. In terms of processing, VPg is uridylylated by the polymerase into VPg-pUpU. This acts as a nucleotide-peptide primer for the genomic RNA replication.

The protein localises to the virion. The protein resides in the host cytoplasm. It localises to the host cytoplasmic vesicle membrane. Its subcellular location is the host nucleus. The catalysed reaction is a ribonucleoside 5'-triphosphate + H2O = a ribonucleoside 5'-diphosphate + phosphate + H(+). It catalyses the reaction Selective cleavage of Tyr-|-Gly bond in the picornavirus polyprotein.. It carries out the reaction RNA(n) + a ribonucleoside 5'-triphosphate = RNA(n+1) + diphosphate. The enzyme catalyses Selective cleavage of Gln-|-Gly bond in the poliovirus polyprotein. In other picornavirus reactions Glu may be substituted for Gln, and Ser or Thr for Gly.. With respect to regulation, replication or transcription is subject to high level of random mutations by the nucleotide analog ribavirin. Its function is as follows. Forms an icosahedral capsid of pseudo T=3 symmetry with capsid proteins VP2 and VP3. The capsid is 300 Angstroms in diameter, composed of 60 copies of each capsid protein and enclosing the viral positive strand RNA genome. Capsid protein VP1 mainly forms the vertices of the capsid. Capsid protein VP1, together with VP2, interacts with host cell receptor SCARB2 to provide virion attachment to target host cells. This attachment induces virion internalization. This attachment induces virion internalization. After binding to its receptor, the capsid undergoes conformational changes. Capsid protein VP1 N-terminus (that contains an amphipathic alpha-helix) and capsid protein VP4 are externalized. Together, they shape a pore in the host membrane through which viral genome is translocated to host cell cytoplasm. Forms an icosahedral capsid of pseudo T=3 symmetry with capsid proteins VP2 and VP3. The capsid is 300 Angstroms in diameter, composed of 60 copies of each capsid protein and enclosing the viral positive strand RNA genome. Capsid protein VP2, together with VP1, interacts with host cell receptor SCARB2 to provide virion attachment to target host cells. Functionally, forms an icosahedral capsid of pseudo T=3 symmetry with capsid proteins VP2 and VP3. The capsid is 300 Angstroms in diameter, composed of 60 copies of each capsid protein and enclosing the viral positive strand RNA genome. In terms of biological role, lies on the inner surface of the capsid shell. After binding to the host receptor, the capsid undergoes conformational changes. Capsid protein VP4 is released, Capsid protein VP1 N-terminus is externalized, and together, they shape a pore in the host membrane through which the viral genome is translocated into the host cell cytoplasm. Its function is as follows. Component of immature procapsids, which is cleaved into capsid proteins VP4 and VP2 after maturation. Allows the capsid to remain inactive before the maturation step. Cysteine protease that cleaves viral polyprotein and specific host proteins. It is responsible for the autocatalytic cleavage between the P1 and P2 regions, which is the first cleavage occurring in the polyprotein. Also cleaves the host translation initiation factor EIF4G1, in order to shut down the capped cellular mRNA translation. Inhibits the host nucleus-cytoplasm protein and RNA trafficking by cleaving host members of the nuclear pores. Counteracts stress granule formation probably by antagonizing its assembly or promoting its dissassembly. Cleaves and inhibits host IFIH1/MDA5, thereby inhibiting the type-I IFN production and the establishment of the antiviral state. Cleaves and inhibits host MAVS, thereby inhibiting the type-I IFN production and the establishment of the antiviral state. Functionally, plays an essential role in the virus replication cycle by acting as a viroporin. Creates a pore in the host endoplasmic reticulum and as a consequence releases Ca2+ in the cytoplasm of infected cell. In turn, high levels of cytoplasmic calcium may trigger membrane trafficking and transport of viral ER-associated proteins to viroplasms, sites of viral genome replication. Also activates the mitochondrial apoptotic pathway by activating host BAX. In terms of biological role, induces and associates with structural rearrangements of intracellular membranes. Displays RNA-binding, nucleotide binding and NTPase activities. May play a role in virion morphogenesis and viral RNA encapsidation by interacting with the capsid protein VP3. Its function is as follows. Localizes the viral replication complex to the surface of membranous vesicles. Together with protein 3CD binds the Cis-Active RNA Element (CRE) which is involved in RNA synthesis initiation. Acts as a cofactor to stimulate the activity of 3D polymerase, maybe through a nucleid acid chaperone activity. Localizes the viral replication complex to the surface of membranous vesicles. It inhibits host cell endoplasmic reticulum-to-Golgi apparatus transport and causes the disassembly of the Golgi complex, possibly through GBF1 interaction. This would result in depletion of MHC, trail receptors and IFN receptors at the host cell surface. Plays an essential role in viral RNA replication by recruiting ACBD3 and PI4KB at the viral replication sites, thereby allowing the formation of the rearranged membranous structures where viral replication takes place. Functionally, acts as a primer for viral RNA replication and remains covalently bound to viral genomic RNA. VPg is uridylylated prior to priming replication into VPg-pUpU. The oriI viral genomic sequence may act as a template for this. The VPg-pUpU is then used as primer on the genomic RNA poly(A) by the RNA-dependent RNA polymerase to replicate the viral genome. During genome replication, the VPg-RNA linkage is removed by the host TDP2, thereby accelerating replication. During the late stage of the replication cycle, host TDP2 is excluded from sites of viral RNA synthesis and encapsidation, allowing for the generation of progeny virions. In terms of biological role, involved in the viral replication complex and viral polypeptide maturation. It exhibits protease activity with a specificity and catalytic efficiency that is different from protease 3C. Protein 3CD lacks polymerase activity. Protein 3CD binds to the 5'UTR of the viral genome. Its function is as follows. Major viral protease that mediates proteolytic processing of the polyprotein. Cleaves host EIF5B, contributing to host translation shutoff. Also cleaves host PABPC1, contributing to host translation shutoff. Disassembles host cytoplasmic stress granules by cleaving host G3BP1, although this effect is less prononced than the inhibition induced by protease 2A. Cleaves host RIGI and thus contributes to the inhibition of type I interferon production. Cleaves host IRF7 and thus contributes to the inhibition of type I interferon production. Cleaves host HNRNPA1 thereby increasing the translation of apoptosis protease activating factor APAF1, leading to apoptosis of the host cell. Cleaves host NLRP1, triggers host N-glycine-mediated degradation of the autoinhibitory NLRP1 N-terminal fragment. Replicates the viral genomic RNA on the surface of intracellular membranes. May form linear arrays of subunits that propagate along a strong head-to-tail interaction called interface-I. Covalently attaches UMP to a tyrosine of VPg, which is used to prime RNA synthesis. The positive stranded RNA genome is first replicated at virus induced membranous vesicles, creating a dsRNA genomic replication form. This dsRNA is then used as template to synthesize positive stranded RNA genomes. ss(+)RNA genomes are either translated, replicated or encapsidated. This chain is Genome polyprotein, found in Homo sapiens (Human).